A 305-amino-acid chain; its full sequence is Sulfate adenylyltransferase subunit 2 (305 aa).

This sequence belongs to the PAPS reductase family. CysD subfamily. Heterodimer composed of CysD, the smaller subunit, and CysN.

It catalyses the reaction sulfate + ATP + H(+) = adenosine 5'-phosphosulfate + diphosphate. The protein operates within sulfur metabolism; hydrogen sulfide biosynthesis; sulfite from sulfate: step 1/3. Functionally, with CysN forms the ATP sulfurylase (ATPS) that catalyzes the adenylation of sulfate producing adenosine 5'-phosphosulfate (APS) and diphosphate, the first enzymatic step in sulfur assimilation pathway. APS synthesis involves the formation of a high-energy phosphoric-sulfuric acid anhydride bond driven by GTP hydrolysis by CysN coupled to ATP hydrolysis by CysD. The chain is Sulfate adenylyltransferase subunit 2 from Stutzerimonas stutzeri (strain A1501) (Pseudomonas stutzeri).